The following is a 116-amino-acid chain: Iron-sulfur cluster insertion protein ErpA (116 aa).

Iron-sulfur cluster is bound by residues cysteine 44, cysteine 108, and cysteine 110.

The protein belongs to the HesB/IscA family. Homodimer. Iron-sulfur cluster serves as cofactor.

In terms of biological role, required for insertion of 4Fe-4S clusters for at least IspG. In Shewanella putrefaciens (strain CN-32 / ATCC BAA-453), this protein is Iron-sulfur cluster insertion protein ErpA.